Reading from the N-terminus, the 209-residue chain is MPADTPIRKKPNAYASVVDPDTGYCTPGAFELERLFWHGAPKYTHVNEVWPNLYIGDEKTALDRYSLEKNGFTHILNAAHGRWNVDTGPEYYSDMTVEYYGVEAEDLPSFNLSQFFYPAAQFIHKALSTPNSKLLVNCAMGRSRSASLVLAYLMIYKNMTVVESITQVLKHRCILPNRGFLKQLRELDIKLALEKRDTHGTANKAQKDD.

One can recognise a Tyrosine-protein phosphatase domain in the interval 45 to 193 (HVNEVWPNLY…LRELDIKLAL (149 aa)). Substrate is bound at residue 137 to 144 (NCAMGRSR). The Phosphocysteine intermediate role is filled by Cys-138.

The protein belongs to the protein-tyrosine phosphatase family. Non-receptor class dual specificity subfamily.

Its subcellular location is the cytoplasm. The protein resides in the nucleus. The enzyme catalyses O-phospho-L-tyrosyl-[protein] + H2O = L-tyrosyl-[protein] + phosphate. It carries out the reaction O-phospho-L-seryl-[protein] + H2O = L-seryl-[protein] + phosphate. It catalyses the reaction O-phospho-L-threonyl-[protein] + H2O = L-threonyl-[protein] + phosphate. Functionally, dual specificity phosphatase able to dephosphorylate phosphotyrosine, phosphoserine and phosphothreonine residues, with a preference for phosphotyrosine as a substrate. In terms of biological role, dual specificity phosphatase able to dephosphorylate phosphotyrosine, phosphoserine and phosphothreonine residues within the same substrate, with a preference for phosphotyrosine as a substrate. Involved in the modulation of AMPK and MAPK1/2 signaling pathway. This is Dual specificity phosphatase 29 (dusp29) from Xenopus laevis (African clawed frog).